We begin with the raw amino-acid sequence, 344 residues long: Tryptophan--tRNA ligase (344 aa).

Residues Gln-20–Ser-22 and Gly-28–Asn-29 contribute to the ATP site. The 'HIGH' region signature appears at Pro-21 to Asn-29. An L-tryptophan-binding site is contributed by Asp-144. ATP-binding positions include Gly-156–Asp-158, Val-197, and Lys-206–Ser-210. The 'KMSKS' region signature appears at Lys-206–Ser-210.

It belongs to the class-I aminoacyl-tRNA synthetase family. In terms of assembly, homodimer.

The protein resides in the cytoplasm. It catalyses the reaction tRNA(Trp) + L-tryptophan + ATP = L-tryptophyl-tRNA(Trp) + AMP + diphosphate + H(+). Its function is as follows. Catalyzes the attachment of tryptophan to tRNA(Trp). The protein is Tryptophan--tRNA ligase of Caulobacter vibrioides (strain ATCC 19089 / CIP 103742 / CB 15) (Caulobacter crescentus).